The chain runs to 65 residues: MTKAAELRQKDVAGLEAEVKSLQKAHFGLRMQKATQQLGNTNTLRTTRRDIARAKTILAEKQAAK.

It belongs to the universal ribosomal protein uL29 family.

The chain is Large ribosomal subunit protein uL29 from Delftia acidovorans (strain DSM 14801 / SPH-1).